We begin with the raw amino-acid sequence, 438 residues long: Putative truncated GMC-type inactive oxidoreductase L894 (438 aa).

Positions 1 to 26 are cleaved as a signal peptide; the sequence is MYVFLLFSRYKIFYVYIKKMAHRSRC. 79–109 provides a ligand contact to FAD; the sequence is DIVIIGAGAAGCVLAYYLTKFSDLKIILLEA.

The protein belongs to the GMC oxidoreductase family. Requires FAD as cofactor.

The protein localises to the virion. In Acanthamoeba polyphaga (Amoeba), this protein is Putative truncated GMC-type inactive oxidoreductase L894.